The primary structure comprises 291 residues: Segregation and condensation protein A (291 aa).

The protein belongs to the ScpA family. As to quaternary structure, component of a cohesin-like complex composed of ScpA, ScpB and the Smc homodimer, in which ScpA and ScpB bind to the head domain of Smc. The presence of the three proteins is required for the association of the complex with DNA.

Its subcellular location is the cytoplasm. Functionally, participates in chromosomal partition during cell division. May act via the formation of a condensin-like complex containing Smc and ScpB that pull DNA away from mid-cell into both cell halves. The protein is Segregation and condensation protein A of Malacoplasma penetrans (strain HF-2) (Mycoplasma penetrans).